The chain runs to 316 residues: tRNA pseudouridine synthase B (316 aa).

The active-site Nucleophile is the D47.

This sequence belongs to the pseudouridine synthase TruB family. Type 1 subfamily.

It carries out the reaction uridine(55) in tRNA = pseudouridine(55) in tRNA. Responsible for synthesis of pseudouridine from uracil-55 in the psi GC loop of transfer RNAs. The protein is tRNA pseudouridine synthase B of Aliivibrio fischeri (strain ATCC 700601 / ES114) (Vibrio fischeri).